The following is a 190-amino-acid chain: Peptidyl-tRNA hydrolase (190 aa).

A tRNA-binding site is contributed by Tyr-14. His-19 (proton acceptor) is an active-site residue. Positions 63, 65, and 112 each coordinate tRNA.

It belongs to the PTH family. As to quaternary structure, monomer.

Its subcellular location is the cytoplasm. The enzyme catalyses an N-acyl-L-alpha-aminoacyl-tRNA + H2O = an N-acyl-L-amino acid + a tRNA + H(+). Its function is as follows. Hydrolyzes ribosome-free peptidyl-tRNAs (with 1 or more amino acids incorporated), which drop off the ribosome during protein synthesis, or as a result of ribosome stalling. Catalyzes the release of premature peptidyl moieties from peptidyl-tRNA molecules trapped in stalled 50S ribosomal subunits, and thus maintains levels of free tRNAs and 50S ribosomes. This is Peptidyl-tRNA hydrolase from Kosmotoga olearia (strain ATCC BAA-1733 / DSM 21960 / TBF 19.5.1).